The chain runs to 1217 residues: Disease resistance protein RPS4 (1217 aa).

The TIR domain occupies 14–175 (PQHQVFINFR…EIVKAVKTAL (162 aa)). Position 23 to 28 (23 to 28 (RGADLR)) interacts with NAD(+). The interval 33-34 (SH) is important for interaction with RRS1. Residue Glu88 is part of the active site. The NB-ARC domain occupies 211 to 472 (EQRLKDLEEK…FRSQDKDYVE (262 aa)). 11 LRR repeats span residues 581-606 (MGNL…KINI), 614-636 (LKEV…DFNP), 637-659 (INLV…DKDT), 682-706 (AEKL…MKKM), 708-728 (MLAF…EMNL), 729-749 (ISLK…PLIS), 750-774 (DNIE…KLQR), 796-818 (LKAL…EIDI), 819-842 (SFLN…SVQY), 843-860 (LCLS…GISQ), and 861-887 (LSQL…NLQC). The segment at 1161-1195 (TTEGVDGRVNKKKKTRMDNGRPKKKQRSGRDDNQT) is disordered. The Nuclear localization signal signature appears at 1170-1177 (NKKKKTRM).

It belongs to the disease resistance TIR-NB-LRR family. Interacts with EDS1. Interacts with SRFR1. Interacts with RRS1.

It localises to the endomembrane system. The protein resides in the cytoplasm. The protein localises to the nucleus. It catalyses the reaction NAD(+) + H2O = ADP-D-ribose + nicotinamide + H(+). In terms of biological role, disease resistance (R) protein that specifically recognizes the AvrRps4 type III effector avirulence protein from P.syringae. Resistance proteins guard the plant against pathogens that contain an appropriate avirulence protein via an indirect interaction with this avirulence protein. That triggers a defense system including the hypersensitive response, which restricts the pathogen growth. Probably acts as a NAD(+) hydrolase (NADase): in response to activation, catalyzes cleavage of NAD(+) into ADP-D-ribose (ADPR) and nicotinamide; NAD(+) cleavage triggering a defense system that promotes cell death. The combined presence of both regular and alternative RPS4 transcripts with truncated open reading frames (ORFs) is necessary for function. RPS4 function is regulated at multiple levels, including gene expression, alternative splicing, and protein stability. When over-expressed, confers temperature-conditioned EDS1-dependent auto-immunity. Heterodimerization with RRS1 is required to form a functional complex to recognize AvrRps4 and PopP2. Abscisic acid deficiency enhances nuclear accumulation of RPS4 and its cell death-inducing activity. The protein is Disease resistance protein RPS4 of Arabidopsis thaliana (Mouse-ear cress).